Here is a 464-residue protein sequence, read N- to C-terminus: V-type ATP synthase beta chain (464 aa).

It belongs to the ATPase alpha/beta chains family.

Functionally, produces ATP from ADP in the presence of a proton gradient across the membrane. The V-type beta chain is a regulatory subunit. This is V-type ATP synthase beta chain from Streptococcus gordonii (strain Challis / ATCC 35105 / BCRC 15272 / CH1 / DL1 / V288).